Reading from the N-terminus, the 333-residue chain is Anthranilate phosphoribosyltransferase (333 aa).

5-phospho-alpha-D-ribose 1-diphosphate contacts are provided by residues glycine 80, 83 to 84 (GD), serine 88, 90 to 93 (NIST), 108 to 116 (KHGNRSVSS), and serine 120. Position 80 (glycine 80) interacts with anthranilate. Serine 92 provides a ligand contact to Mg(2+). Anthranilate is bound at residue asparagine 111. Residue arginine 166 coordinates anthranilate. Residues aspartate 224 and glutamate 225 each contribute to the Mg(2+) site.

Belongs to the anthranilate phosphoribosyltransferase family. As to quaternary structure, homodimer. Mg(2+) serves as cofactor.

The catalysed reaction is N-(5-phospho-beta-D-ribosyl)anthranilate + diphosphate = 5-phospho-alpha-D-ribose 1-diphosphate + anthranilate. It functions in the pathway amino-acid biosynthesis; L-tryptophan biosynthesis; L-tryptophan from chorismate: step 2/5. In terms of biological role, catalyzes the transfer of the phosphoribosyl group of 5-phosphorylribose-1-pyrophosphate (PRPP) to anthranilate to yield N-(5'-phosphoribosyl)-anthranilate (PRA). This is Anthranilate phosphoribosyltransferase from Yersinia pseudotuberculosis serotype O:1b (strain IP 31758).